A 329-amino-acid chain; its full sequence is uncharacterized protein (329 aa).

Positions 37–180 (LAEKILGHSG…AMLLFHSRGV (144 aa)) constitute an SIS domain. 52–57 (GVGKSG) is a binding site for ATP. CBS domains lie at 206–265 (MFPK…GGEV) and 274–329 (MTAN…AGLL).

Belongs to the SIS family. GutQ/KpsF subfamily.

This is an uncharacterized protein from Chlamydia pneumoniae (Chlamydophila pneumoniae).